The sequence spans 269 residues: uncharacterized protein (269 aa).

The protein to T.pallidum TP0678.

This is an uncharacterized protein from Borreliella burgdorferi (strain ATCC 35210 / DSM 4680 / CIP 102532 / B31) (Borrelia burgdorferi).